The following is a 788-amino-acid chain: Protein kintoun (788 aa).

Disordered stretches follow at residues 194 to 249 (LRKP…SEQD), 415 to 438 (NNSEGLTSESNLDTGAPYLPEISP), and 628 to 754 (HKEH…SSSV). A compositionally biased stretch (basic and acidic residues) spans 225 to 241 (GKEKKDQKRVIKEEHKQ). Over residues 417 to 427 (SEGLTSESNLD) the composition is skewed to polar residues. Basic and acidic residues-rich tracts occupy residues 628 to 644 (HKEHCTDHSEHERDVGV) and 667 to 682 (ENTELDRDHTSERYEE). 2 stretches are compositionally biased toward polar residues: residues 685–701 (STSCTGESTSDQQQKDS) and 744–754 (NFDSRPASSSV).

This sequence belongs to the PIH1 family. Kintoun subfamily.

Its subcellular location is the cytoplasm. The protein localises to the dynein axonemal particle. Functionally, required for cytoplasmic pre-assembly of axonemal dyneins, thereby playing a central role in motility in cilia and flagella. Involved in pre-assembly of dynein arm complexes in the cytoplasm before intraflagellar transport loads them for the ciliary compartment. This is Protein kintoun from Xenopus laevis (African clawed frog).